A 186-amino-acid polypeptide reads, in one-letter code: Ribosome-recycling factor (186 aa).

The protein belongs to the RRF family.

The protein localises to the cytoplasm. In terms of biological role, responsible for the release of ribosomes from messenger RNA at the termination of protein biosynthesis. May increase the efficiency of translation by recycling ribosomes from one round of translation to another. In Janthinobacterium sp. (strain Marseille) (Minibacterium massiliensis), this protein is Ribosome-recycling factor.